We begin with the raw amino-acid sequence, 432 residues long: Crenactin (432 aa).

ATP contacts are provided by residues 20 to 24 (TSYVK), 182 to 184 (GGH), 235 to 239 (EVVKR), 354 to 358 (GAFSW), and Q399.

The protein belongs to the actin family. As to quaternary structure, monomer. The crenactin monomers polymerize into right-handed helical filaments, with 8 subunits per complete turn of the helix. Forms single-stranded filaments under high salt concentrations and double-stranded filaments under low salt concentrations. Interacts with arcadin-1 and arcadin-2.

The protein localises to the cytoplasm. Its subcellular location is the cytoskeleton. The enzyme catalyses ATP + H2O = ADP + phosphate + H(+). Crenactin polymerization is inhibited by interaction with arcadin-2. Also significantly inhibited by elevated antibiotic A22 concentrations. In terms of biological role, forms the backbone of an actin-like archaeal cytoskeleton, which is involved in cell shape determination. Has ATPase activity. Shows highest activity towards ATP or GTP as nucleotide, and only residual activity on UTP, CTP and dNTPs. The chain is Crenactin from Pyrobaculum calidifontis (strain DSM 21063 / JCM 11548 / VA1).